The sequence spans 948 residues: MLKLLLGDPNARKLKRYQPIVTDINILEEDIALLSDDQLRSKTADFRQQFENVVSFAKQRALLDELLPEAFAVVREAAKRVLGMRHFDVQLIGGMVLHEGQIGEMKTGEGKTLVATLPSYLNALTGRGVHVVTVNDYLARRDAEWMGQVHRFLGLSVGLIQQDMSPAERRRNYACDITYATNSELGFDYLRDNMATDLSEVVQREFQYCVIDEVDSILIDEARTPLIISGQVERPQEKYQQAADVAAALERAAEQGKDGIDPEGDYEVDEKQRSCTLTDEGFAKAEQNLRVRDLFDPADPWAHYITNALKAKELFVRDVNYIVRDGEAVIVDEFTGRVMPGRRWSDGQHQAIEAKEQLAIQPETQTLASITYQNFFLLYPRLAGMTGTAKTEEVEFEKTYKLETSVIPTNQPRARADWVDQVYKTESAKWRAVANETAEIHKQGRPVLVGTTSVEKSELLSSLLSEQEIPHNLLNAKPENVEREAEIVAQAGRAGAVTIATNMAGRGTDIILGGNSDYMARLKLREVLLPRLVRPEEGHRPPVPLQRAAETGGGFAAKAAASNGSHGHVLSEARAIGSLYPCSLTDDTDQFLAELARELVKVWGDRALSVIELEDRISTAAEKAPTDDAQIAALRESIARVKTEYDVVVTQEEVRVREAGGLHVIGTERHESRRVDNQLRGRAGRQGDLGSTRFFLSLEDNLLRIFGGERVASLMNAFRVEEDMPIESGMLTRSLEGAQKKVETYYYDIRKQVFEYDEVMNNQRRAVYAERRRVLEGRGLKKQVIGYGERTMDDIVEAYVNPDLPPEEWDLGQLVSKVQQFVYLLEDLKPEQLQGLSMEELKSFLQEQLRNAYDIKEGQIEQQRPGLMREAERFFILQQIDTLWREHLQAMDALRESVGLRGYGQKDPLIEYKNEGYDMFLEMMANMRRNVIYSMFMFQPAASGQEQA.

Residues Gln90, 108–112 (GEGKT), and Asp509 each bind ATP.

This sequence belongs to the SecA family. As to quaternary structure, monomer and homodimer. Part of the essential Sec protein translocation apparatus which comprises SecA, SecYEG and auxiliary proteins SecDF. Other proteins may also be involved.

Its subcellular location is the cell inner membrane. The protein resides in the cellular thylakoid membrane. The protein localises to the cytoplasm. It catalyses the reaction ATP + H2O + cellular proteinSide 1 = ADP + phosphate + cellular proteinSide 2.. Its function is as follows. Part of the Sec protein translocase complex. Interacts with the SecYEG preprotein conducting channel. Has a central role in coupling the hydrolysis of ATP to the transfer of proteins into and across the cell membrane, serving as an ATP-driven molecular motor driving the stepwise translocation of polypeptide chains across the membrane. Probably participates in protein translocation into and across both the cytoplasmic and thylakoid membranes in cyanobacterial cells. The polypeptide is Protein translocase subunit SecA (Prochlorococcus marinus (strain MIT 9313)).